Here is a 183-residue protein sequence, read N- to C-terminus: ATP synthase subunit delta (183 aa).

It belongs to the ATPase delta chain family. As to quaternary structure, F-type ATPases have 2 components, F(1) - the catalytic core - and F(0) - the membrane proton channel. F(1) has five subunits: alpha(3), beta(3), gamma(1), delta(1), epsilon(1). F(0) has three main subunits: a(1), b(2) and c(10-14). The alpha and beta chains form an alternating ring which encloses part of the gamma chain. F(1) is attached to F(0) by a central stalk formed by the gamma and epsilon chains, while a peripheral stalk is formed by the delta and b chains.

The protein localises to the cell membrane. Its function is as follows. F(1)F(0) ATP synthase produces ATP from ADP in the presence of a proton or sodium gradient. F-type ATPases consist of two structural domains, F(1) containing the extramembraneous catalytic core and F(0) containing the membrane proton channel, linked together by a central stalk and a peripheral stalk. During catalysis, ATP synthesis in the catalytic domain of F(1) is coupled via a rotary mechanism of the central stalk subunits to proton translocation. In terms of biological role, this protein is part of the stalk that links CF(0) to CF(1). It either transmits conformational changes from CF(0) to CF(1) or is implicated in proton conduction. The protein is ATP synthase subunit delta of Oenococcus oeni (strain ATCC BAA-331 / PSU-1).